Here is a 91-residue protein sequence, read N- to C-terminus: Signal recognition particle 19 kDa protein (91 aa).

The protein belongs to the SRP19 family. Part of the signal recognition particle protein translocation system, which is composed of SRP and FtsY. Archaeal SRP consists of a 7S RNA molecule of 300 nucleotides and two protein subunits: SRP54 and SRP19.

It localises to the cytoplasm. Functionally, involved in targeting and insertion of nascent membrane proteins into the cytoplasmic membrane. Binds directly to 7S RNA and mediates binding of the 54 kDa subunit of the SRP. The chain is Signal recognition particle 19 kDa protein from Methanothermobacter thermautotrophicus (strain ATCC 29096 / DSM 1053 / JCM 10044 / NBRC 100330 / Delta H) (Methanobacterium thermoautotrophicum).